Here is a 251-residue protein sequence, read N- to C-terminus: Gamma-glutamyl peptidase 5 (251 aa).

One can recognise a Glutamine amidotransferase type-1 domain in the interval serine 17–methionine 214. Cysteine 101 (nucleophile) is an active-site residue. Active-site residues include histidine 193 and glutamate 195.

Belongs to the peptidase C26 family.

It localises to the cytoplasm. It is found in the cytosol. It functions in the pathway secondary metabolite biosynthesis. Functionally, involved in glucosinolate biosynthesis. Hydrolyzes the gamma-glutamyl peptide bond of several glutathione (GSH) conjugates to produce Cys-Gly conjugates related to glucosinolates. The gamma-Glu-Cys-Gly-GSH conjugates are the sulfur-donating molecule in glucosinolate biosynthesis. The polypeptide is Gamma-glutamyl peptidase 5 (Arabidopsis thaliana (Mouse-ear cress)).